The following is a 211-amino-acid chain: Guanylate kinase (211 aa).

One can recognise a Guanylate kinase-like domain in the interval 7–187 (GLLIILSGPS…AADRIIAIIR (181 aa)). 14 to 21 (GPSGVGKA) provides a ligand contact to ATP.

The protein belongs to the guanylate kinase family.

It is found in the cytoplasm. It carries out the reaction GMP + ATP = GDP + ADP. In terms of biological role, essential for recycling GMP and indirectly, cGMP. The polypeptide is Guanylate kinase (Aster yellows witches'-broom phytoplasma (strain AYWB)).